The chain runs to 242 residues: tRNA pseudouridine synthase A (242 aa).

Catalysis depends on Asp-51, which acts as the Nucleophile. A substrate-binding site is contributed by Tyr-107.

It belongs to the tRNA pseudouridine synthase TruA family. As to quaternary structure, homodimer.

The catalysed reaction is uridine(38/39/40) in tRNA = pseudouridine(38/39/40) in tRNA. Its function is as follows. Formation of pseudouridine at positions 38, 39 and 40 in the anticodon stem and loop of transfer RNAs. In Helicobacter pylori (strain G27), this protein is tRNA pseudouridine synthase A.